The following is a 98-amino-acid chain: MNAVTVLAFTAFALIVHDCYSEEANTTPISVKDQCANVTCRRTVDNRGKRHIDGCPPGCLCVLKGPDSKDNLDGTCYLLATTPKSTTTSTEQSFNMEE.

Residues 1 to 21 form the signal peptide; sequence MNAVTVLAFTAFALIVHDCYS. 3 disulfide bridges follow: cysteine 35-cysteine 59, cysteine 40-cysteine 61, and cysteine 55-cysteine 76.

It belongs to the RaCI family. Expressed in salivary glands.

Its subcellular location is the secreted. In terms of biological role, complement inhibitor. Prevents complement-mediated C5 activation by binding to C5. Binds C5 at a different binding site than the other tick complement inhibitors OmCI and CirpT1, and the drug eculizumab. This Rhipicephalus microplus (Cattle tick) protein is Complement inhibitor RaCI2.